Here is a 607-residue protein sequence, read N- to C-terminus: DNA mismatch repair protein MutL (607 aa).

This sequence belongs to the DNA mismatch repair MutL/HexB family.

In terms of biological role, this protein is involved in the repair of mismatches in DNA. It is required for dam-dependent methyl-directed DNA mismatch repair. May act as a 'molecular matchmaker', a protein that promotes the formation of a stable complex between two or more DNA-binding proteins in an ATP-dependent manner without itself being part of a final effector complex. The sequence is that of DNA mismatch repair protein MutL from Anaeromyxobacter sp. (strain K).